A 274-amino-acid polypeptide reads, in one-letter code: 2,3,4,5-tetrahydropyridine-2,6-dicarboxylate N-succinyltransferase (274 aa).

The substrate site is built by R104 and D141.

The protein belongs to the transferase hexapeptide repeat family. As to quaternary structure, homotrimer.

Its subcellular location is the cytoplasm. It carries out the reaction (S)-2,3,4,5-tetrahydrodipicolinate + succinyl-CoA + H2O = (S)-2-succinylamino-6-oxoheptanedioate + CoA. It participates in amino-acid biosynthesis; L-lysine biosynthesis via DAP pathway; LL-2,6-diaminopimelate from (S)-tetrahydrodipicolinate (succinylase route): step 1/3. This Salmonella typhi protein is 2,3,4,5-tetrahydropyridine-2,6-dicarboxylate N-succinyltransferase.